We begin with the raw amino-acid sequence, 94 residues long: DNA-directed RNA polymerase subunit omega (94 aa).

Belongs to the RNA polymerase subunit omega family. The RNAP catalytic core consists of 2 alpha, 1 beta, 1 beta' and 1 omega subunit. When a sigma factor is associated with the core the holoenzyme is formed, which can initiate transcription.

It catalyses the reaction RNA(n) + a ribonucleoside 5'-triphosphate = RNA(n+1) + diphosphate. Its function is as follows. Promotes RNA polymerase assembly. Latches the N- and C-terminal regions of the beta' subunit thereby facilitating its interaction with the beta and alpha subunits. In Bifidobacterium longum (strain DJO10A), this protein is DNA-directed RNA polymerase subunit omega.